The chain runs to 282 residues: Aquaporin PIP2-7 (282 aa).

The tract at residues Met1 to Pro21 is disordered. The Cytoplasmic portion of the chain corresponds to Met1–Arg38. Residues Ala39–Ile59 form a helical membrane-spanning segment. The Extracellular segment spans residues Gly60–Ser71. Residues Gly72–Cys92 traverse the membrane as a helical segment. Residues Thr93–Ala120 lie on the Cytoplasmic side of the membrane. The NPA 1 motif lies at Asn102–Ala104. The chain crosses the membrane as a helical span at residues Leu121–Ile141. Over Met142–Lys162 the chain is Extracellular. A helical membrane pass occupies residues Gly163–Ala183. The Cytoplasmic portion of the chain corresponds to Thr184 to Pro196. The chain crosses the membrane as a helical span at residues Val197–Ile217. Topologically, residues Thr218 to Trp244 are extracellular. Residues Asn223–Ala225 carry the NPA 2 motif. A helical transmembrane segment spans residues Ile245–Leu265. The Cytoplasmic portion of the chain corresponds to Arg266–Asn282.

Belongs to the MIP/aquaporin (TC 1.A.8) family. PIP (TC 1.A.8.11) subfamily. As to expression, expressed in roots, leaves and fruits.

The protein localises to the cell membrane. Functionally, water channel required to facilitate the transport of water across cell membrane; mercury-insensitive. Contributes to the tolerance to multiple abiotic stresses including salt (NaCl), cold and water deprivation, by modulating cytosolic K(+)/Na(+) ratio, maintaining osmotic balance, and reducing membrane injury (e.g. oxidative injury). Also regulates the expression of abscisic acid (ABA)- biosynthetic and -responsive genes during dehydration and salt stresses. The chain is Aquaporin PIP2-7 from Musa acuminata (Banana).